A 498-amino-acid polypeptide reads, in one-letter code: Protein flp (498 aa).

Transmembrane regions (helical) follow at residues 6 to 26, 389 to 409, 433 to 453, and 471 to 491; these read LYFLSISIIILVAISIAIHIT, FNIVTVLMTTLILLAFIFSAY, LTLCLCIAIALILYALPYLIL, and LALITTLIALFSTLIVILLFL.

It localises to the cell membrane. Its function is as follows. Its precise function is unknown. Has no penicillin-binding activity and is not involved in methicillin resistance. The sequence is that of Protein flp (flp) from Staphylococcus aureus (strain MW2).